Consider the following 200-residue polypeptide: Ribonuclease HII (200 aa).

Residues 9 to 198 (ALIAGVDEVG…VQRVLAQAKG (190 aa)) enclose the RNase H type-2 domain. A divalent metal cation is bound by residues aspartate 15, glutamate 16, and aspartate 107.

This sequence belongs to the RNase HII family. The cofactor is Mn(2+). Requires Mg(2+) as cofactor.

The protein localises to the cytoplasm. It carries out the reaction Endonucleolytic cleavage to 5'-phosphomonoester.. Functionally, endonuclease that specifically degrades the RNA of RNA-DNA hybrids. This is Ribonuclease HII from Pseudoalteromonas translucida (strain TAC 125).